The chain runs to 80 residues: Translation initiation factor IF-1 (80 aa).

Residues 6-80 (RKQEHEKERG…LTRGRIVYRL (75 aa)) enclose the S1-like domain.

It belongs to the IF-1 family. Component of the 30S ribosomal translation pre-initiation complex which assembles on the 30S ribosome in the order IF-2 and IF-3, IF-1 and N-formylmethionyl-tRNA(fMet); mRNA recruitment can occur at any time during PIC assembly.

The protein localises to the cytoplasm. In terms of biological role, one of the essential components for the initiation of protein synthesis. Stabilizes the binding of IF-2 and IF-3 on the 30S subunit to which N-formylmethionyl-tRNA(fMet) subsequently binds. Helps modulate mRNA selection, yielding the 30S pre-initiation complex (PIC). Upon addition of the 50S ribosomal subunit IF-1, IF-2 and IF-3 are released leaving the mature 70S translation initiation complex. The polypeptide is Translation initiation factor IF-1 (Aquifex aeolicus (strain VF5)).